Here is a 177-residue protein sequence, read N- to C-terminus: ATP synthase subunit delta (177 aa).

The protein belongs to the ATPase delta chain family. In terms of assembly, F-type ATPases have 2 components, F(1) - the catalytic core - and F(0) - the membrane proton channel. F(1) has five subunits: alpha(3), beta(3), gamma(1), delta(1), epsilon(1). F(0) has three main subunits: a(1), b(2) and c(10-14). The alpha and beta chains form an alternating ring which encloses part of the gamma chain. F(1) is attached to F(0) by a central stalk formed by the gamma and epsilon chains, while a peripheral stalk is formed by the delta and b chains.

It is found in the cell inner membrane. F(1)F(0) ATP synthase produces ATP from ADP in the presence of a proton or sodium gradient. F-type ATPases consist of two structural domains, F(1) containing the extramembraneous catalytic core and F(0) containing the membrane proton channel, linked together by a central stalk and a peripheral stalk. During catalysis, ATP synthesis in the catalytic domain of F(1) is coupled via a rotary mechanism of the central stalk subunits to proton translocation. In terms of biological role, this protein is part of the stalk that links CF(0) to CF(1). It either transmits conformational changes from CF(0) to CF(1) or is implicated in proton conduction. This Shigella dysenteriae serotype 1 (strain Sd197) protein is ATP synthase subunit delta.